A 507-amino-acid chain; its full sequence is Arabinose import ATP-binding protein AraG (507 aa).

2 ABC transporter domains span residues 14–249 and 249–505; these read LRFN…MVGR and RDIQ…LPRT. Position 46–53 (46–53) interacts with ATP; it reads GENGAGKS.

This sequence belongs to the ABC transporter superfamily. Arabinose importer (TC 3.A.1.2.2) family. As to quaternary structure, the complex is composed of two ATP-binding proteins (AraG), two transmembrane proteins (AraH) and a solute-binding protein (AraF).

It localises to the cell inner membrane. It carries out the reaction L-arabinose(out) + ATP + H2O = L-arabinose(in) + ADP + phosphate + H(+). Its function is as follows. Part of the ABC transporter complex AraFGH involved in arabinose import. Responsible for energy coupling to the transport system. In Pseudomonas syringae pv. tomato (strain ATCC BAA-871 / DC3000), this protein is Arabinose import ATP-binding protein AraG.